The chain runs to 302 residues: Urease accessory protein UreD 2 (302 aa).

Belongs to the UreD family. As to quaternary structure, ureD, UreF and UreG form a complex that acts as a GTP-hydrolysis-dependent molecular chaperone, activating the urease apoprotein by helping to assemble the nickel containing metallocenter of UreC. The UreE protein probably delivers the nickel.

It localises to the cytoplasm. Functionally, required for maturation of urease via the functional incorporation of the urease nickel metallocenter. This chain is Urease accessory protein UreD 2, found in Brucella canis (strain ATCC 23365 / NCTC 10854 / RM-666).